The following is a 946-amino-acid chain: MKPLSSPLQQYWQTVVERLPEPLAEESLSAQAKSVLTFSDFVQDSVIAHPEWLTELESQPPQADEWQHYAAWLQEALSNVSDEAGLMRELRLFRRRIMVRIAWAQTLALVTEESILQQLSHLAETLIVAARDWLYDACCREWGTPCNAQGEAQPLLILGMGKLGGGELNFSSDIDLIFAWPEHGCTQGGRRELDNAQFFTRMGQRLIKVLDQPTQDGFVYRVDMRLRPFGESGPLVLSFAALEDYYQEQGRDWERYAMVKARIMGDSDGVYANELRAMLRPFVFRRYIDFSVIQSLRNMKGMIAREVRRRGLTDNIKLGAGGIREIEFIVQVFQLIRGGREPSLQSRALLPTLSAIAALHLLSENDAEQLRVAYLFLRRLENLLQSINDEQTQTLPSDELTRARLAWAMDFADWPQLTGVLTAHMANVRRVFNELIGDDESETQEESLSEQWRELWQDALQEDDTTPVLAHLSEDERKQVLMLIADFRKELDKRTIGPRGRQVLDHLMPHLLSDVCAREDAAVTLSRITALLVGIVTRTTYLELLSEFPAALKHLISLCAASPMIASQLARYPLLLDELLDPNTLYQPTATDAYRDELRQYLLRVPEDDEEQQLEALRQFKQAQLLRIAAADIAGTLPVMKVSDHLTWLAEAMIDAVVQQAWVQMVARYGKPNHLNEREGRGFAVVGYGKLGGWELGYSSDLDLIFLHDCPMDAMTDGEREIDGRQFYLRLAQRIMHLFSTRTSSGILYEVDARLRPSGAAGMLVTSAEAFADYQKNEAWTWEHQALVRARVVYGDPQLTAHFDAVRREIMTLPREGKTLQTEVREMREKMRAHLGNKHRDRFDIKADEGGITDIEFITQYLVLRYAHEKPKLTRWSDNVRILELLAQNDIMEEQEAMALTRAYTTLRDELHHLALQELPGHVSEDCFTAERELVRASWQKWLVEE.

Positions Met-1 to Glu-440 are adenylyl removase. Residues Ser-449–Glu-946 are adenylyl transferase.

It belongs to the GlnE family. Mg(2+) serves as cofactor.

It catalyses the reaction [glutamine synthetase]-O(4)-(5'-adenylyl)-L-tyrosine + phosphate = [glutamine synthetase]-L-tyrosine + ADP. The catalysed reaction is [glutamine synthetase]-L-tyrosine + ATP = [glutamine synthetase]-O(4)-(5'-adenylyl)-L-tyrosine + diphosphate. Functionally, involved in the regulation of glutamine synthetase GlnA, a key enzyme in the process to assimilate ammonia. When cellular nitrogen levels are high, the C-terminal adenylyl transferase (AT) inactivates GlnA by covalent transfer of an adenylyl group from ATP to specific tyrosine residue of GlnA, thus reducing its activity. Conversely, when nitrogen levels are low, the N-terminal adenylyl removase (AR) activates GlnA by removing the adenylyl group by phosphorolysis, increasing its activity. The regulatory region of GlnE binds the signal transduction protein PII (GlnB) which indicates the nitrogen status of the cell. The chain is Bifunctional glutamine synthetase adenylyltransferase/adenylyl-removing enzyme from Escherichia coli O45:K1 (strain S88 / ExPEC).